We begin with the raw amino-acid sequence, 437 residues long: Eukaryotic peptide chain release factor subunit 1 (437 aa).

Ala2 is subject to N-acetylalanine. An NIKS motif; plays an important role in translational termination motif is present at residues 61–64; the sequence is NIKS. At Lys63 the chain carries 4-hydroxylysine. Lys87 participates in a covalent cross-link: Glycyl lysine isopeptide (Lys-Gly) (interchain with G-Cter in SUMO2). An N5-methylglutamine modification is found at Gln185. Phosphothreonine is present on Thr347. A Glycyl lysine isopeptide (Lys-Gly) (interchain with G-Cter in SUMO2) cross-link involves residue Lys404.

This sequence belongs to the eukaryotic release factor 1 family. In terms of assembly, component of the eRF1-eRF3-GTP ternary complex, composed of ETF1/ERF1 and eRF3 (GSPT1/ERF3A or GSPT2/ERF3B) and GTP. Component of the transient SURF (SMG1-UPF1-eRF1-eRF3) complex. Interacts with JMJD4. The ETF1-GSPT1 complex interacts with JMJD4. Post-translationally, hydroxylation at Lys-63 by JMJD4 promotes its translational termination efficiency. In terms of processing, methylated at Gln-185 by N6AMT1. Ubiquitinated via 'Lys-6'-linked polyubiquitin chains by RNF14 and RNF25 in response to ribosome collisions (ribosome stalling), leading to its degradation by the proteasome and rescue of stalled ribosomes.

It localises to the cytoplasm. In terms of biological role, component of the eRF1-eRF3-GTP ternary complex, a ternary complex that mediates translation termination in response to the termination codons. The eRF1-eRF3-GTP complex binds to a stop codon in the ribosomal A-site. ETF1/ERF1 is responsible for stop codon recognition and inducing hydrolysis of peptidyl-tRNA. Following GTP hydrolysis, eRF3 (GSPT1/ERF3A or GSPT2/ERF3B) dissociates, permitting ETF1/eRF1 to accommodate fully in the A-site, followed by hydrolysis of peptidyl-tRNA. Component of the transient SURF complex which recruits UPF1 to stalled ribosomes in the context of nonsense-mediated decay (NMD) of mRNAs containing premature stop codons. Required for SHFL-mediated translation termination which inhibits programmed ribosomal frameshifting (-1PRF) of mRNA from viruses and cellular genes. In Pongo abelii (Sumatran orangutan), this protein is Eukaryotic peptide chain release factor subunit 1 (ETF1).